Consider the following 1892-residue polypeptide: Protein TIC 214 (1892 aa).

6 consecutive transmembrane segments (helical) span residues 12 to 32 (LISLYMTIINSVVMVGLYYGF), 68 to 88 (FIAGQLMMFISIYYVPLHLAL), 89 to 109 (GKPHTITVLALPYLLFHFFWN), 128 to 148 (LSIQCVFLNNLIIQLFNHFIL), 176 to 196 (VGWLIGHILLMKWVGLVLVWI), and 225 to 245 (IFSILLFITCVYYLGRIPSPI). The span at 256 to 266 (PEEVGESEEER) shows a compositional bias: acidic residues. The segment at 256–299 (PEEVGESEEERNIEIETISEGGGANQKQGTEENTSSSLFSEEEV) is disordered. The span at 280–294 (NQKQGTEENTSSSLF) shows a compositional bias: polar residues. Residues 1115–1135 (FYFFINFFIEKIYMDILLYII) traverse the membrane as a helical segment. The segment at 1613–1636 (SNQEKDVEEDYDKSDKKKRRKKKQ) is disordered.

This sequence belongs to the TIC214 family. In terms of assembly, part of the Tic complex.

It localises to the plastid. Its subcellular location is the chloroplast inner membrane. Its function is as follows. Involved in protein precursor import into chloroplasts. May be part of an intermediate translocation complex acting as a protein-conducting channel at the inner envelope. This is Protein TIC 214 from Gossypium hirsutum (Upland cotton).